Reading from the N-terminus, the 309-residue chain is Eugenol synthase 2 (309 aa).

NADP(+) contacts are provided by residues T13 to I16, V35 to K45, R36, F86 to Q88, S111 to F113, K134, and N154 to F156. The active-site Proton donor/acceptor is the K134.

The protein belongs to the NmrA-type oxidoreductase family. Mostly expressed in petals, and, to a lower extent, in sepals, stamens and pistils.

It carries out the reaction eugenol + a carboxylate + NADP(+) = a coniferyl ester + NADPH. It catalyses the reaction eugenol + acetate + NADP(+) = (E)-coniferyl acetate + NADPH. It participates in aromatic compound metabolism; phenylpropanoid biosynthesis. Functionally, catalyzes the synthesis of the phenylpropene eugenol from coniferyl acetate. Phenylpropenes are produced by plants as defense compounds with antimicrobial and antianimal properties, or as floral attractants of pollinators. The chain is Eugenol synthase 2 from Clarkia breweri (Fairy fans).